Here is a 338-residue protein sequence, read N- to C-terminus: Acyl-CoA Delta(11) desaturase (338 aa).

2 helical membrane passes run Ile33–Tyr53 and Trp61–Gly81. A Histidine box-1 motif is present at residues His83–His88. Residues Leu97–Val117 form a helical membrane-spanning segment. The short motif at His120–His124 is the Histidine box-2 element. 2 consecutive transmembrane segments (helical) span residues Ala181–Trp201 and Ala212–Gly234. The Histidine box-3 signature appears at His260 to His264. The segment at Thr318–Glu338 is disordered.

Belongs to the fatty acid desaturase type 1 family. It depends on Fe cation as a cofactor. In terms of tissue distribution, detected in the pheromone gland.

Its subcellular location is the membrane. It carries out the reaction an 11,12-saturated fatty acyl-CoA + 2 Fe(II)-[cytochrome b5] + O2 + 2 H(+) = an (11Z)-Delta(11)-fatty acyl-CoA + 2 Fe(III)-[cytochrome b5] + 2 H2O. Catalyzes the formation of delta(11) fatty acyl precursors in the pheromone gland, and has high activity towards palmitic acid and stearic acid. This Spodoptera littoralis (Egyptian cotton leafworm) protein is Acyl-CoA Delta(11) desaturase.